A 260-amino-acid chain; its full sequence is Cytochrome c oxidase subunit 3 (260 aa).

Helical transmembrane passes span 41–61 (LTLV…RDII), 81–101 (GMIL…WAFF), 133–153 (TGVL…ILAG), 161–181 (ALFL…WEYI), 196–216 (FFVA…FLMV), and 238–258 (AWYW…IYWW).

The protein belongs to the cytochrome c oxidase subunit 3 family. As to quaternary structure, component of the cytochrome c oxidase (complex IV, CIV), a multisubunit enzyme composed of a catalytic core of 3 subunits and several supernumerary subunits. The complex exists as a monomer or a dimer and forms supercomplexes (SCs) in the inner mitochondrial membrane with ubiquinol-cytochrome c oxidoreductase (cytochrome b-c1 complex, complex III, CIII).

The protein resides in the mitochondrion inner membrane. It carries out the reaction 4 Fe(II)-[cytochrome c] + O2 + 8 H(+)(in) = 4 Fe(III)-[cytochrome c] + 2 H2O + 4 H(+)(out). Component of the cytochrome c oxidase, the last enzyme in the mitochondrial electron transport chain which drives oxidative phosphorylation. The respiratory chain contains 3 multisubunit complexes succinate dehydrogenase (complex II, CII), ubiquinol-cytochrome c oxidoreductase (cytochrome b-c1 complex, complex III, CIII) and cytochrome c oxidase (complex IV, CIV), that cooperate to transfer electrons derived from NADH and succinate to molecular oxygen, creating an electrochemical gradient over the inner membrane that drives transmembrane transport and the ATP synthase. Cytochrome c oxidase is the component of the respiratory chain that catalyzes the reduction of oxygen to water. Electrons originating from reduced cytochrome c in the intermembrane space (IMS) are transferred via the dinuclear copper A center (CU(A)) of subunit 2 and heme A of subunit 1 to the active site in subunit 1, a binuclear center (BNC) formed by heme A3 and copper B (CU(B)). The BNC reduces molecular oxygen to 2 water molecules using 4 electrons from cytochrome c in the IMS and 4 protons from the mitochondrial matrix. This chain is Cytochrome c oxidase subunit 3 (COIII), found in Strongylocentrotus purpuratus (Purple sea urchin).